The primary structure comprises 432 residues: Histidine--tRNA ligase (432 aa).

It belongs to the class-II aminoacyl-tRNA synthetase family.

It is found in the cytoplasm. It carries out the reaction tRNA(His) + L-histidine + ATP = L-histidyl-tRNA(His) + AMP + diphosphate + H(+). This is Histidine--tRNA ligase from Pyrococcus furiosus (strain ATCC 43587 / DSM 3638 / JCM 8422 / Vc1).